Reading from the N-terminus, the 62-residue chain is Large ribosomal subunit protein bL28 (62 aa).

This sequence belongs to the bacterial ribosomal protein bL28 family.

This is Large ribosomal subunit protein bL28 from Frankia casuarinae (strain DSM 45818 / CECT 9043 / HFP020203 / CcI3).